Here is a 320-residue protein sequence, read N- to C-terminus: Pyrroline-5-carboxylate reductase 2 (320 aa).

Position 2 is an N-acetylserine (Ser2). NADP(+)-binding positions include 6–11 and Ser34; that span reads IGAGQL. NADPH is bound by residues Ala8, Gln10, Leu11, Ser34, Glu36, Asn56, Val70, Lys71, and Ala97. NADP(+) contacts are provided by residues Asn56, 69–72, and 95–97; these read AVKP and CAA. Glu164 is an L-proline binding site. Asn230 contributes to the NADPH binding site. L-proline contacts are provided by Ala237 and Thr238. The segment covering 295–305 has biased composition (low complexity); sequence PTVSTLTPSSP. The tract at residues 295 to 320 is disordered; that stretch reads PTVSTLTPSSPGKLLTRSLALGGKKD. Ser304 bears the Phosphoserine mark.

This sequence belongs to the pyrroline-5-carboxylate reductase family. Homodecamer; composed of 5 homodimers. Interacts with LTO1. Detected in erythrocytes (at protein level). Expressed in fetal brain.

The protein resides in the cytoplasm. It is found in the mitochondrion. The enzyme catalyses L-proline + NADP(+) = (S)-1-pyrroline-5-carboxylate + NADPH + 2 H(+). The catalysed reaction is L-proline + NAD(+) = (S)-1-pyrroline-5-carboxylate + NADH + 2 H(+). The protein operates within amino-acid biosynthesis; L-proline biosynthesis; L-proline from L-glutamate 5-semialdehyde: step 1/1. Subject to competitive inhibition by NADP. Was reported not to be inhibited by proline. However other study demonstrated an inhibition by proline. Its function is as follows. Oxidoreductase that catalyzes the last step in proline biosynthesis, which corresponds to the reduction of pyrroline-5-carboxylate to L-proline using NAD(P)H. At physiologic concentrations, has higher specific activity in the presence of NADH. Involved in cellular response to oxidative stress. In some cell types, such as erythrocytes, its primary function may be the generation of NADP(+). The sequence is that of Pyrroline-5-carboxylate reductase 2 from Homo sapiens (Human).